The sequence spans 490 residues: MESKEISIRSRTPPSKLYSIQSCIGRGNFGDVYKAVDRVTQEIVAIKVVNLEHSDEDIELLAQEIFFLAELKSPLITNYIATMLEDVSMWIVMEYCGGGSCSDLLKRSYVNGLPEEKVSFIIHEVTLGLKYLHEQRKIHRDIKAANILLNEEGMVKLGDFGVSGHIRSTLKRDTFVGTPYWMAPEVVCCEVDGYNEKADIWSLGITTYELLKGLPPLSKYDPMKVMTNLPKRKPPKLQGPFSDAAKDFVAGCLVKTPADRPSAYNLLSFEFVKNITITNLKSDVDLIKQKKVQERYTKVPKYPLQNRLYKNSNTVRGKEFWNFESTRLSTTQISKEELSPITQDSPTSSLNMESPYLLHGQTVTPITNPSSSSFRKCTQPVFELDSGMDIDSGCPNAQAETEIVPLSNHNKKHKKNDIQALKIEKFDYLKNIVSHILNRMYDRARDDETRKYVNEMLKQFIKTEANVPGFNEVFIEEISLRIEAIKKGFV.

The region spanning 18-272 (YSIQSCIGRG…AYNLLSFEFV (255 aa)) is the Protein kinase domain. Residues 24–32 (IGRGNFGDV) and lysine 47 each bind ATP. Residue aspartate 141 is the Proton acceptor of the active site.

Belongs to the protein kinase superfamily. STE Ser/Thr protein kinase family. STE20 subfamily.

It is found in the nucleus. Its subcellular location is the cytoplasm. It catalyses the reaction L-seryl-[protein] + ATP = O-phospho-L-seryl-[protein] + ADP + H(+). It carries out the reaction L-threonyl-[protein] + ATP = O-phospho-L-threonyl-[protein] + ADP + H(+). Its function is as follows. Serine/threonine protein kinase required for spore wall development. In Saccharomyces cerevisiae (strain ATCC 204508 / S288c) (Baker's yeast), this protein is Sporulation-specific protein 1 (SPS1).